Consider the following 460-residue polypeptide: L-seryl-tRNA(Sec) selenium transferase (460 aa).

An N6-(pyridoxal phosphate)lysine modification is found at lysine 293.

Belongs to the SelA family. The cofactor is pyridoxal 5'-phosphate.

It is found in the cytoplasm. The enzyme catalyses L-seryl-tRNA(Sec) + selenophosphate + H(+) = L-selenocysteinyl-tRNA(Sec) + phosphate. It participates in aminoacyl-tRNA biosynthesis; selenocysteinyl-tRNA(Sec) biosynthesis; selenocysteinyl-tRNA(Sec) from L-seryl-tRNA(Sec) (bacterial route): step 1/1. In terms of biological role, converts seryl-tRNA(Sec) to selenocysteinyl-tRNA(Sec) required for selenoprotein biosynthesis. In Pasteurella multocida (strain Pm70), this protein is L-seryl-tRNA(Sec) selenium transferase.